The sequence spans 349 residues: Fructose-1,6-bisphosphatase class 1 (349 aa).

Residues E113, D135, I137, and D138 each contribute to the Mg(2+) site. Substrate is bound by residues 138 to 141 (DGSS), N230, Y258, and K288. E294 provides a ligand contact to Mg(2+).

This sequence belongs to the FBPase class 1 family. As to quaternary structure, homotetramer. Requires Mg(2+) as cofactor.

The protein localises to the cytoplasm. It catalyses the reaction beta-D-fructose 1,6-bisphosphate + H2O = beta-D-fructose 6-phosphate + phosphate. Its pathway is carbohydrate biosynthesis; Calvin cycle. This Trichormus variabilis (strain ATCC 29413 / PCC 7937) (Anabaena variabilis) protein is Fructose-1,6-bisphosphatase class 1.